Reading from the N-terminus, the 450-residue chain is Tubulin beta-3 chain (450 aa).

The MREI motif signature appears at 1-4 (MREI). Gln-11, Glu-69, Ser-138, Gly-142, Thr-143, and Gly-144 together coordinate GTP. Glu-69 provides a ligand contact to Mg(2+). Phosphoserine; by CDK1 is present on Ser-172. GTP-binding residues include Asn-204 and Asn-226. Residues 422–450 (YQQYQDATAEEEGEMYEDDDEESEAQGPK) are disordered. Acidic residues predominate over residues 429-450 (TAEEEGEMYEDDDEESEAQGPK). The residue at position 438 (Glu-438) is a 5-glutamyl polyglutamate. Ser-444 is subject to Phosphoserine.

It belongs to the tubulin family. In terms of assembly, heterodimer of alpha- and beta-tubulin. A typical microtubule is a hollow water-filled tube with an outer diameter of 25 nm and an inner diameter of 15 nM. Alpha-beta heterodimers associate head-to-tail to form protofilaments running lengthwise along the microtubule wall with the beta-tubulin subunit facing the microtubule plus end conferring a structural polarity. Microtubules usually have 13 protofilaments but different protofilament numbers can be found in some organisms and specialized cells. Interacts with gamma-tubulin; the interaction allows microtubules to nucleate from the gamma-tubulin ring complex (gTuRC). Interacts with UNC5C (via cytoplasmic domain); this interaction is decreased by NTN1/Netrin-1. Interacts with NLRP5/MATER at cytoskeleton microtubules. Interacts with DPYSL5. Interacts with CFAP61. Mg(2+) serves as cofactor. Some glutamate residues at the C-terminus are polyglycylated, resulting in polyglycine chains on the gamma-carboxyl group. Glycylation is mainly limited to tubulin incorporated into axonemes (cilia and flagella) whereas glutamylation is prevalent in neuronal cells, centrioles, axonemes, and the mitotic spindle. Both modifications can coexist on the same protein on adjacent residues, and lowering polyglycylation levels increases polyglutamylation, and reciprocally. Cilia and flagella glycylation is required for their stability and maintenance. Flagella glycylation controls sperm motility. In terms of processing, some glutamate residues at the C-terminus are polyglutamylated, resulting in polyglutamate chains on the gamma-carboxyl group. Polyglutamylation plays a key role in microtubule severing by spastin (SPAST). SPAST preferentially recognizes and acts on microtubules decorated with short polyglutamate tails: severing activity by SPAST increases as the number of glutamates per tubulin rises from one to eight, but decreases beyond this glutamylation threshold. Glutamylation is also involved in cilia motility. Post-translationally, phosphorylated on Ser-172 by CDK1 during the cell cycle, from metaphase to telophase, but not in interphase. This phosphorylation inhibits tubulin incorporation into microtubules.

The protein localises to the cytoplasm. It localises to the cytoskeleton. It is found in the cell projection. The protein resides in the growth cone. Its subcellular location is the lamellipodium. The protein localises to the filopodium. Functionally, tubulin is the major constituent of microtubules, protein filaments consisting of alpha- and beta-tubulin heterodimers. Microtubules grow by the addition of GTP-tubulin dimers to the microtubule end, where a stabilizing cap forms. Below the cap, alpha-beta tubulin heterodimers are in GDP-bound state, owing to GTPase activity of alpha-tubulin. TUBB3 plays a critical role in proper axon guidance and maintenance. Binding of NTN1/Netrin-1 to its receptor UNC5C might cause dissociation of UNC5C from polymerized TUBB3 in microtubules and thereby lead to increased microtubule dynamics and axon repulsion. Plays a role in dorsal root ganglion axon projection towards the spinal cord. The chain is Tubulin beta-3 chain (Tubb3) from Rattus norvegicus (Rat).